An 87-amino-acid polypeptide reads, in one-letter code: DNA-directed RNA polymerase subunit Rpo5 (87 aa).

This sequence belongs to the archaeal Rpo5/eukaryotic RPB5 RNA polymerase subunit family. Part of the RNA polymerase complex.

The protein resides in the cytoplasm. The catalysed reaction is RNA(n) + a ribonucleoside 5'-triphosphate = RNA(n+1) + diphosphate. Its function is as follows. DNA-dependent RNA polymerase (RNAP) catalyzes the transcription of DNA into RNA using the four ribonucleoside triphosphates as substrates. This is DNA-directed RNA polymerase subunit Rpo5 from Thermoplasma acidophilum (strain ATCC 25905 / DSM 1728 / JCM 9062 / NBRC 15155 / AMRC-C165).